The primary structure comprises 167 residues: D-aminoacyl-tRNA deacylase 2 (167 aa).

The short motif at 159–160 (GP) is the Gly-transPro motif, allows the protein to recognize chirality of D-amino acids element.

Belongs to the DTD family. Homodimer.

Its subcellular location is the cytoplasm. The enzyme catalyses a D-aminoacyl-tRNA + H2O = a tRNA + a D-alpha-amino acid + H(+). It catalyses the reaction glycyl-tRNA(Ala) + H2O = tRNA(Ala) + glycine + H(+). It carries out the reaction D-tyrosyl-tRNA(Tyr) + H2O = D-tyrosine + tRNA(Tyr). The catalysed reaction is L-alanyl-tRNA(Thr) + H2O = tRNA(Thr) + L-alanine + H(+). Deacylates mischarged D-aminoacyl-tRNAs. Also deacylates mischarged glycyl-tRNA(Ala), protecting cells against glycine mischarging by AlaRS. Probably acts by rejecting L-amino acids from its binding site rather than specific recognition of D-amino acids. Catalyzes the hydrolysis of D-tyrosyl-tRNA(Tyr), has no activity on correctly charged L-tyrosyl-tRNA(Tyr). By recycling D-aminoacyl-tRNA to D-amino acids and free tRNA molecules, this enzyme counteracts the toxicity associated with the formation of D-aminoacyl-tRNA entities in vivo and helps enforce protein L-homochirality. In contrast to DTD1, deacylates L-Ala mischarged on tRNA(Thr)(G4.U69) by alanine-tRNA ligase AARS. Can deacylate L-Ala due to a relaxed specificity for substrate chirality caused by the trans conformation of the Gly-Pro motif in the active site. Also hydrolyzes correctly charged, achiral, glycyl-tRNA(Gly) in vitro, although in vivo EEF1A1/EF-Tu may protect cognate achiral glycyl-tRNA(Gly) from DTD2-mediated deacetylation. This is D-aminoacyl-tRNA deacylase 2 (DTD2) from Gallus gallus (Chicken).